The following is a 537-amino-acid chain: ATP synthase subunit beta (537 aa).

Positions 1-61 are disordered; the sequence is MAKAATSKKE…SSPQKGGKKG (61 aa). Residues 7–18 show a composition bias toward basic and acidic residues; sequence SKKEASKVEAKK. The segment covering 44-55 has biased composition (polar residues); sequence NSPSRTGSSSPQ. 209-216 is a binding site for ATP; that stretch reads GGAGVGKT.

The protein belongs to the ATPase alpha/beta chains family. In terms of assembly, F-type ATPases have 2 components, CF(1) - the catalytic core - and CF(0) - the membrane proton channel. CF(1) has five subunits: alpha(3), beta(3), gamma(1), delta(1), epsilon(1). CF(0) has three main subunits: a(1), b(2) and c(9-12). The alpha and beta chains form an alternating ring which encloses part of the gamma chain. CF(1) is attached to CF(0) by a central stalk formed by the gamma and epsilon chains, while a peripheral stalk is formed by the delta and b chains.

It localises to the cell inner membrane. It catalyses the reaction ATP + H2O + 4 H(+)(in) = ADP + phosphate + 5 H(+)(out). Its function is as follows. Produces ATP from ADP in the presence of a proton gradient across the membrane. The catalytic sites are hosted primarily by the beta subunits. This is ATP synthase subunit beta from Bartonella bacilliformis (strain ATCC 35685 / KC583 / Herrer 020/F12,63).